Consider the following 59-residue polypeptide: MDHRLLEIVACPVCKGKLTFDKENQELICKLDRLAYPIKEGIPVLLEPEARSMGMDEGR.

It belongs to the UPF0434 family.

This chain is UPF0434 protein VV1_2087, found in Vibrio vulnificus (strain CMCP6).